We begin with the raw amino-acid sequence, 365 residues long: Aminomethyltransferase (365 aa).

It belongs to the GcvT family. In terms of assembly, the glycine cleavage system is composed of four proteins: P, T, L and H.

The catalysed reaction is N(6)-[(R)-S(8)-aminomethyldihydrolipoyl]-L-lysyl-[protein] + (6S)-5,6,7,8-tetrahydrofolate = N(6)-[(R)-dihydrolipoyl]-L-lysyl-[protein] + (6R)-5,10-methylene-5,6,7,8-tetrahydrofolate + NH4(+). Functionally, the glycine cleavage system catalyzes the degradation of glycine. The sequence is that of Aminomethyltransferase from Desulfitobacterium hafniense (strain Y51).